The primary structure comprises 393 residues: NAD(P)H-quinone oxidoreductase subunit H, chloroplastic (393 aa).

The protein belongs to the complex I 49 kDa subunit family. As to quaternary structure, NDH is composed of at least 16 different subunits, 5 of which are encoded in the nucleus.

It is found in the plastid. It localises to the chloroplast thylakoid membrane. The enzyme catalyses a plastoquinone + NADH + (n+1) H(+)(in) = a plastoquinol + NAD(+) + n H(+)(out). The catalysed reaction is a plastoquinone + NADPH + (n+1) H(+)(in) = a plastoquinol + NADP(+) + n H(+)(out). In terms of biological role, NDH shuttles electrons from NAD(P)H:plastoquinone, via FMN and iron-sulfur (Fe-S) centers, to quinones in the photosynthetic chain and possibly in a chloroplast respiratory chain. The immediate electron acceptor for the enzyme in this species is believed to be plastoquinone. Couples the redox reaction to proton translocation, and thus conserves the redox energy in a proton gradient. This Phaseolus vulgaris (Kidney bean) protein is NAD(P)H-quinone oxidoreductase subunit H, chloroplastic.